A 640-amino-acid chain; its full sequence is 1-deoxy-D-xylulose-5-phosphate synthase (640 aa).

Residues His79 and 120–122 each bind thiamine diphosphate; that span reads GHS. Asp151 contributes to the Mg(2+) binding site. Thiamine diphosphate contacts are provided by residues 152–153, Asn180, Tyr288, and Glu372; that span reads GG. Position 180 (Asn180) interacts with Mg(2+).

This sequence belongs to the transketolase family. DXPS subfamily. In terms of assembly, homodimer. It depends on Mg(2+) as a cofactor. The cofactor is thiamine diphosphate.

It catalyses the reaction D-glyceraldehyde 3-phosphate + pyruvate + H(+) = 1-deoxy-D-xylulose 5-phosphate + CO2. Its pathway is metabolic intermediate biosynthesis; 1-deoxy-D-xylulose 5-phosphate biosynthesis; 1-deoxy-D-xylulose 5-phosphate from D-glyceraldehyde 3-phosphate and pyruvate: step 1/1. Catalyzes the acyloin condensation reaction between C atoms 2 and 3 of pyruvate and glyceraldehyde 3-phosphate to yield 1-deoxy-D-xylulose-5-phosphate (DXP). This chain is 1-deoxy-D-xylulose-5-phosphate synthase, found in Nitrosococcus oceani (strain ATCC 19707 / BCRC 17464 / JCM 30415 / NCIMB 11848 / C-107).